An 81-amino-acid polypeptide reads, in one-letter code: Trefoil factor 3 (81 aa).

Residues 1 to 22 (METRAFWTTLLLVLVAGSSCKA) form the signal peptide. The P-type domain occupies 31–74 (SQCMVPANVRVDCGYPTVTSEQCNNRGCCFDSSIPNVPWCFKPL). Disulfide bonds link C33–C59, C43–C58, and C53–C70.

As to quaternary structure, monomer. Homodimer; disulfide-linked. As to expression, expressed in goblet cells of the intestines, and colon, in paraventricular hypothalamus and supraoptic nuclei. Weakly expressed in gastric epithelial cells (at protein level). Expressed by goblet cells of small and large intestinal epithelia, kidney and stomach. Expressed in the paraventricular hypothalamus, arcuate nucleus and amygdala of the brain. Weakly expressed in gastric epithelial cells.

It is found in the secreted. The protein resides in the extracellular space. Its subcellular location is the extracellular matrix. The protein localises to the cytoplasm. Functionally, involved in the maintenance and repair of the intestinal mucosa. Promotes the mobility of epithelial cells in healing processes (motogen). In Rattus norvegicus (Rat), this protein is Trefoil factor 3 (Tff3).